Here is a 738-residue protein sequence, read N- to C-terminus: MSSSSKDSSFQVETPVQNILETSTNSELQDQVSSPYEPDYNSPVKQAAASISALQTQDDTLFNNVDERTLENKDGNKSDDANFDQVSGIPSGSLEIPILNSATSNIRLTPSDTYNNIPVSDTNNEEISKNIYGAPILESTSSDFQSKDSLSTTQPSVSGGNGSTSQSPPSLDVEQNKPFSISNEPVEQETENSSTKDLQVYDFQTASEHLPEQSLQNTTYYDPSKTYSSVNFEEIEYGKSHEKLDLPYRTTDFIPYSKDLSTSPEAHRTSIYSYSANLPNYYNEHNELHEHHNPQTPSSPESAYSPENLQLNHEAQNVEYLGNNAAEKSLQMNLEDEQRFQQFLKDEESIMSNWYPGQFPSASRLFLGHLNTKSLSKRNLWKVFKIYGPLAQIVLKANYGFVQFFTNEDCARALNAEQGNFVRGQKLHLEISKIQKKYQNQIENMKKGSHVTKSNQYSEMIGNLPYPTSSRKRTRSPLMSKGKSYDRKGSISMSKNFSPDCEILVTEDCPKEFVWGVEKVFQERRLNIHTTCLYRDSNLQVIIKSCIINSVKSIILINAGLAHLGKVSVQVFKDGSSDSEVRCDEYAAVDVMVAASIVHHAKTSLMHSAASSTPSYNGERIVPDVPSPCISTNPNLPALVGSLDSVNLHHLLGFIQNTYSTTSYIPTRVSFNPNDTGGSFGTITSQSQFVVNEMPKNYARDNYEALHSQESRQRSSVAGNKQLQKILEQLAELKQPDF.

Polar residues-rich tracts occupy residues 1-34 (MSSS…QVSS), 140-169 (TSSD…QSPP), and 177-197 (KPFS…STKD). 2 disordered regions span residues 1–51 (MSSS…AASI) and 140–197 (TSSD…STKD). Residues 363–434 (SRLFLGHLNT…QKLHLEISKI (72 aa)) enclose the RRM domain. The disordered stretch occupies residues 466-487 (YPTSSRKRTRSPLMSKGKSYDR).

This is an uncharacterized protein from Schizosaccharomyces pombe (strain 972 / ATCC 24843) (Fission yeast).